Reading from the N-terminus, the 111-residue chain is MAAKIFPVVKFATKVTIAGGALYVAYDSGLLGGSNEGSVALARAKSAIPPAVDEWMKYFGFELPATPKIEFSPLDAWNSGVQKSIHALSVAPSTVGDYTKQGLQYVKDLSK.

Residues 8-26 (VVKFATKVTIAGGALYVAY) form a helical membrane-spanning segment.

It belongs to the MICOS complex subunit Mic13 family. In terms of assembly, component of the mitochondrial contact site and cristae organizing system (MICOS) complex.

It is found in the mitochondrion inner membrane. Functionally, component of the MICOS complex, a large protein complex of the mitochondrial inner membrane that plays crucial roles in the maintenance of crista junctions, inner membrane architecture, and formation of contact sites to the outer membrane. Constituent of mature MICOS complex, it is required for the formation of cristae junction (CJ) and maintenance of cristae morphology. Required for the incorporation of MIC10 into the MICOS complex. This chain is MICOS complex subunit MIC13, found in Danio rerio (Zebrafish).